A 202-amino-acid polypeptide reads, in one-letter code: Outer-membrane lipoprotein LolB (202 aa).

An N-terminal signal peptide occupies residues 1 to 18 (MFRRTYFWLMLLPLFMVG). Residue Cys-19 is the site of N-palmitoyl cysteine attachment. Cys-19 carries the S-diacylglycerol cysteine lipid modification.

This sequence belongs to the LolB family. In terms of assembly, monomer.

It localises to the cell outer membrane. Its function is as follows. Plays a critical role in the incorporation of lipoproteins in the outer membrane after they are released by the LolA protein. The chain is Outer-membrane lipoprotein LolB from Vibrio vulnificus (strain YJ016).